A 199-amino-acid polypeptide reads, in one-letter code: Protein CPL1 (199 aa).

The N-terminal stretch at 1–30 is a signal peptide; sequence MFSIPPSVRRLVFLFLIAAPLLSIVLPVAA. The interval 34-58 is disordered; the sequence is GVDPPSKLQPRAPQPSRRMGATKRS. N148 carries N-linked (GlcNAc...) asparagine glycosylation.

It localises to the secreted. Its function is as follows. Virulence factor which promotes fungal virulence by enhancing type 2 inflammation in the mouse host. Likely binds mouse Tlr4 independently of Ly96/Md2 and activates Tlr4 signaling to drive Stat3 phosphorylation in interstitial macrophages, which promotes the initial induction of Arg1/arginase-1 and increases macrophage sensitivity to Il4 signaling. The sequence is that of Protein CPL1 from Cryptococcus neoformans var. grubii serotype A (strain H99 / ATCC 208821 / CBS 10515 / FGSC 9487) (Filobasidiella neoformans var. grubii).